The primary structure comprises 736 residues: Phosphoribosylformylglycinamidine synthase subunit PurL (736 aa).

Histidine 49 is an active-site residue. 2 residues coordinate ATP: tyrosine 52 and lysine 91. Mg(2+) is bound at residue glutamate 93. Substrate contacts are provided by residues 94–97 (SHNH) and arginine 116. Histidine 95 acts as the Proton acceptor in catalysis. Residue aspartate 117 coordinates Mg(2+). Glutamine 240 provides a ligand contact to substrate. Aspartate 268 lines the Mg(2+) pocket. 312 to 314 (ESQ) contacts substrate. Aspartate 493 and glycine 530 together coordinate ATP. A Mg(2+)-binding site is contributed by asparagine 531. Serine 533 is a binding site for substrate.

The protein belongs to the FGAMS family. Monomer. Part of the FGAM synthase complex composed of 1 PurL, 1 PurQ and 2 PurS subunits.

The protein resides in the cytoplasm. It catalyses the reaction N(2)-formyl-N(1)-(5-phospho-beta-D-ribosyl)glycinamide + L-glutamine + ATP + H2O = 2-formamido-N(1)-(5-O-phospho-beta-D-ribosyl)acetamidine + L-glutamate + ADP + phosphate + H(+). It participates in purine metabolism; IMP biosynthesis via de novo pathway; 5-amino-1-(5-phospho-D-ribosyl)imidazole from N(2)-formyl-N(1)-(5-phospho-D-ribosyl)glycinamide: step 1/2. Functionally, part of the phosphoribosylformylglycinamidine synthase complex involved in the purines biosynthetic pathway. Catalyzes the ATP-dependent conversion of formylglycinamide ribonucleotide (FGAR) and glutamine to yield formylglycinamidine ribonucleotide (FGAM) and glutamate. The FGAM synthase complex is composed of three subunits. PurQ produces an ammonia molecule by converting glutamine to glutamate. PurL transfers the ammonia molecule to FGAR to form FGAM in an ATP-dependent manner. PurS interacts with PurQ and PurL and is thought to assist in the transfer of the ammonia molecule from PurQ to PurL. The polypeptide is Phosphoribosylformylglycinamidine synthase subunit PurL (Rhodopseudomonas palustris (strain HaA2)).